We begin with the raw amino-acid sequence, 252 residues long: Small ribosomal subunit protein eS1 (252 aa).

This sequence belongs to the eukaryotic ribosomal protein eS1 family. In terms of assembly, component of the small ribosomal subunit. Mature ribosomes consist of a small (40S) and a large (60S) subunit. The 40S subunit contains about 33 different proteins and 1 molecule of RNA (18S). The 60S subunit contains about 49 different proteins and 3 molecules of RNA (25S, 5.8S and 5S).

The protein resides in the cytoplasm. The chain is Small ribosomal subunit protein eS1 from Enterocytozoon bieneusi (strain H348) (Microsporidian parasite).